Reading from the N-terminus, the 567-residue chain is Geraniol synthase, chloroplastic (567 aa).

Residues methionine 1–arginine 63 constitute a chloroplast transit peptide. Residues serine 48–glutamate 75 form a disordered region. Over residues glutamine 64 to glutamate 75 the composition is skewed to basic and acidic residues. Residues arginine 286, aspartate 323, aspartate 327, arginine 466, and aspartate 469 each coordinate (2E)-geranyl diphosphate. 2 residues coordinate Mn(2+): aspartate 323 and aspartate 327. The DDXXD motif motif lies at aspartate 323 to aspartate 327. Mn(2+) contacts are provided by aspartate 469, threonine 473, and glutamate 477.

This sequence belongs to the terpene synthase family. Tpsb subfamily. In terms of assembly, homodimer. Mn(2+) serves as cofactor. In terms of tissue distribution, expressed in the peltate glandular trichomes of the leaves.

The protein localises to the plastid. It localises to the chloroplast. It carries out the reaction (2E)-geranyl diphosphate + H2O = (2E)-geraniol + diphosphate. The protein operates within secondary metabolite biosynthesis; terpenoid biosynthesis. Functionally, monoterpene synthase that catalyzes the formation of geraniol from geranyl diphosphate. In Ocimum basilicum (Sweet basil), this protein is Geraniol synthase, chloroplastic (GES).